A 221-amino-acid polypeptide reads, in one-letter code: 7-cyano-7-deazaguanine synthase (221 aa).

7–17 provides a ligand contact to ATP; that stretch reads LSGGMDSTTLL. Residues C183, C191, C194, and C197 each coordinate Zn(2+).

It belongs to the QueC family. In terms of assembly, homodimer. Zn(2+) is required as a cofactor.

It catalyses the reaction 7-carboxy-7-deazaguanine + NH4(+) + ATP = 7-cyano-7-deazaguanine + ADP + phosphate + H2O + H(+). The protein operates within purine metabolism; 7-cyano-7-deazaguanine biosynthesis. Functionally, catalyzes the ATP-dependent conversion of 7-carboxy-7-deazaguanine (CDG) to 7-cyano-7-deazaguanine (preQ(0)). The polypeptide is 7-cyano-7-deazaguanine synthase (Caldicellulosiruptor bescii (strain ATCC BAA-1888 / DSM 6725 / KCTC 15123 / Z-1320) (Anaerocellum thermophilum)).